A 315-amino-acid polypeptide reads, in one-letter code: 4-carboxy-2-hydroxymuconate-6-semialdehyde dehydrogenase (315 aa).

It belongs to the Gfo/Idh/MocA family. Homodimer.

The enzyme catalyses 4-carboxy-2-hydroxymuconate semialdehyde hemiacetal + NADP(+) = 2-oxo-2H-pyran-4,6-dicarboxylate + NADPH + H(+). The protein operates within secondary metabolite metabolism; lignin degradation. Inhibited by p-chloromercuribenzoate (10 mM), HgCl2 (10 mM), or 5,5-dithiobis(2-nitrobenzoate) (100 mM). In terms of biological role, involved in the degradation of protocatechuate (PCA) via the PCA 4,5-cleavage pathway. Catalyzes the oxidation of the hemiacetal form of 4-carboxy-2-hydroxymuconate-6-semialdehyde (CHMS) to produce 2-pyrone-4,6-dicarboxylate (PDC). LigC has 10-times-higher affinity to NADP than to NAD. In Sphingobium sp. (strain NBRC 103272 / SYK-6), this protein is 4-carboxy-2-hydroxymuconate-6-semialdehyde dehydrogenase (ligC).